Consider the following 1712-residue polypeptide: Latent-transforming growth factor beta-binding protein 1 (1712 aa).

The N-terminal stretch at 1-20 is a signal peptide; that stretch reads MAGAWLRWGLLLWAGLLAWS. A disordered region spans residues 63–148; the sequence is SSTATSSRSL…QDTQSSGGSR (86 aa). The span at 136–147 shows a compositional bias: polar residues; the sequence is KVQQDTQSSGGS. In terms of domain architecture, EGF-like 1 spans 181-213; sequence TKPSCVPPCQNGGMCLRPQFCVCKPGTKGKACE. Cystine bridges form between Cys-185–Cys-195, Cys-189–Cys-201, and Cys-203–Cys-212. N-linked (GlcNAc...) asparagine glycans are attached at residues Asn-339 and Asn-370. An EGF-like 2 domain is found at 391–423; the sequence is RVVICHLPCMNGGQCSSRDKCQCPPNFTGKLCQ. 6 disulfide bridges follow: Cys-395–Cys-405, Cys-399–Cys-411, Cys-413–Cys-422, Cys-551–Cys-573, Cys-560–Cys-586, and Cys-574–Cys-589. Asn-416 is a glycosylation site (N-linked (GlcNAc...) asparagine). One can recognise a TB 1 domain in the interval 549–601; sequence GRCFQETIGSQCGKALPGLSKQEDCCGTVGTSWGFNKCQKCPKKQSYHGYTQM. N-linked (GlcNAc...) asparagine glycosylation occurs at Asn-612. The EGF-like 3; calcium-binding domain occupies 618-658; that stretch reads DINECQLQGVCPNGECLNTMGSYRCSCKMGFGPDPTFSSCV. 7 disulfides stabilise this stretch: Cys-622-Cys-633, Cys-628-Cys-642, Cys-644-Cys-657, Cys-671-Cys-694, Cys-681-Cys-706, Cys-695-Cys-709, and Cys-696-Cys-721. Ser-639 carries an O-linked (Glc) serine glycan. The TB 2 domain occupies 669–721; the sequence is GPCYRLVSPGRQCMHPLSVHLTKQICCCSVGKAWGPQCEKCPLPGTAAFKEIC. Positions 752–803 are disordered; that stretch reads KNTQPVAKSTHPPPLPAKEEPVEALTSSREHGPGVAEPEVVTAPPEKEIPSL. Residues Thr-761 and Thr-793 are each glycosylated (O-linked (GalNAc...) threonine). Residues 865-906 enclose the EGF-like 4; calcium-binding domain; the sequence is EINECTVNPDICGAGHCINLPVRYTCICYEGYKFSEQQRKCI. Cystine bridges form between Cys-869-Cys-881, Cys-876-Cys-890, Cys-892-Cys-905, Cys-911-Cys-923, Cys-918-Cys-932, Cys-934-Cys-947, Cys-953-Cys-964, Cys-959-Cys-973, Cys-976-Cys-988, Cys-994-Cys-1005, Cys-1000-Cys-1014, Cys-1017-Cys-1028, Cys-1034-Cys-1045, Cys-1040-Cys-1054, Cys-1056-Cys-1069, Cys-1075-Cys-1086, Cys-1081-Cys-1095, Cys-1097-Cys-1110, Cys-1116-Cys-1127, Cys-1122-Cys-1136, Cys-1138-Cys-1151, Cys-1157-Cys-1169, Cys-1164-Cys-1178, Cys-1180-Cys-1192, Cys-1198-Cys-1210, Cys-1204-Cys-1219, Cys-1221-Cys-1234, Cys-1240-Cys-1252, Cys-1246-Cys-1261, Cys-1263-Cys-1276, Cys-1282-Cys-1294, Cys-1289-Cys-1303, Cys-1305-Cys-1319, Cys-1340-Cys-1363, Cys-1350-Cys-1375, Cys-1364-Cys-1380, and Cys-1365-Cys-1392. The region spanning 907–948 is the EGF-like 5; calcium-binding domain; the sequence is DIDECAQAQHLCSQGRCENTEGSFLCICPAGFIASEEGSNCI. An O-linked (Glc) serine glycan is attached at Ser-929. An EGF-like 6; calcium-binding domain is found at 949–989; sequence DVDECLRPDVCRDGRCINTAGAFRCEYCDSGYRMSRRGHCE. Position 966 is a (3R)-3-hydroxyasparagine (Asn-966). The 40-residue stretch at 990–1029 folds into the EGF-like 7; calcium-binding domain; that stretch reads DIDECLTPSTCPEEQCVNSPGSYQCVPCTEGFRGWNGQCL. Residue Ser-1011 is glycosylated (O-linked (Glc) serine). The region spanning 1030 to 1070 is the EGF-like 8; calcium-binding domain; it reads DVDECLQPKVCTNGSCTNLEGSYMCSCHKGYSPTPDHRHCQ. N-linked (GlcNAc...) asparagine glycosylation occurs at Asn-1042. Ser-1051 carries O-linked (Glc) serine glycosylation. The EGF-like 9; calcium-binding domain maps to 1071–1111; that stretch reads DIDECQQGNLCMNGQCKNTDGSFRCTCGQGYQLSAAKDQCE. Residues 1112-1152 form the EGF-like 10; calcium-binding domain; that stretch reads DIDECEHRHLCSHGQCRNTEGSFQCLCNQGYRASVLGDHCE. Asn-1129 carries the (3R)-3-hydroxyasparagine modification. Ser-1133 carries an O-linked (Glc) serine glycan. In terms of domain architecture, EGF-like 11; calcium-binding spans 1153 to 1193; that stretch reads DINECLEDSSVCQGGDCINTAGSYDCTCPDGLQLNDNKGCQ. Residues 1194–1235 form the EGF-like 12; calcium-binding domain; sequence DINECAQPGLCAPHGECLNTQGSFHCVCEQGFSISADGRTCE. O-linked (Glc) serine glycosylation is present at Ser-1216. The 42-residue stretch at 1236–1277 folds into the EGF-like 13; calcium-binding domain; that stretch reads DIDECVNNTVCDSHGFCDNTAGSFRCLCYQGFQAPQDGQGCV. Asn-1242 carries N-linked (GlcNAc...) asparagine glycosylation. In terms of domain architecture, EGF-like 14; calcium-binding spans 1278-1320; that stretch reads DVNECELLSGVCGEAFCENVEGSFLCVCADENQEYSPMTGQCR. The segment at 1335 to 1402 is 8-Cys3 region; the sequence is EEKKECYYNL…PRGKGFVPAG (68 aa). The TB 3 domain maps to 1338–1392; sequence KECYYNLNDASLCDNVLAPNVTKQECCCTSGAGWGDNCEIFPCPVQGTAEFSEMC. N-linked (GlcNAc...) asparagine glycosylation occurs at Asn-1357. Residue Ser-1405 is modified to Phosphoserine. The EGF-like 15; calcium-binding domain maps to 1415-1457; that stretch reads DADECLLFGEEICKNGYCLNTQPGYECYCKEGTYYDPVKLQCF. 10 cysteine pairs are disulfide-bonded: Cys-1419-Cys-1432, Cys-1427-Cys-1441, Cys-1443-Cys-1456, Cys-1462-Cys-1473, Cys-1468-Cys-1482, Cys-1484-Cys-1497, Cys-1517-Cys-1541, Cys-1527-Cys-1553, Cys-1542-Cys-1556, and Cys-1543-Cys-1568. In terms of domain architecture, EGF-like 16; calcium-binding spans 1458–1498; that stretch reads DMDECQDPNSCIDGQCVNTEGSYNCFCTHPMVLDASEKRCV. An O-linked (Glc) serine glycan is attached at Ser-1479. Residues 1498–1712 are C-terminal domain; it reads VQPTESNEQI…LNLDKDSDLE (215 aa). In terms of domain architecture, TB 4 spans 1515-1568; it reads DLCWEHLSEEYVCSRPLVGKQTTYTECCCLYGEAWGMQCALCPMKDSDDYAQLC. 2 positions are modified to phosphoserine: Ser-1588 and Ser-1607. The region spanning 1612–1652 is the EGF-like 17 domain; sequence QAEECGILNGCENGRCVRVQEGYTCDCFDGYHLDMAKMTCV. 6 disulfides stabilise this stretch: Cys-1616–Cys-1627, Cys-1622–Cys-1636, Cys-1638–Cys-1651, Cys-1657–Cys-1672, Cys-1667–Cys-1681, and Cys-1683–Cys-1696. One can recognise an EGF-like 18; calcium-binding domain in the interval 1653 to 1697; it reads DVNECSELNNRMSLCKNAKCINTEGSYKCVCLPGYVPSDKPNYCT. Residue Ser-1678 is glycosylated (O-linked (Glc) serine).

Belongs to the LTBP family. In terms of assembly, interacts with TGFB1; associates via disulfide bonds with the Latency-associated peptide chain (LAP) regulatory chain of TGFB1, leading to regulate activation of TGF-beta-1. LTBP1 does not bind directly to TGF-beta-1, the active chain of TGFB1. Interacts (via C-terminal domain) with FBN1 (via N-terminal domain). Interacts with FBN2. Interacts with ADAMTSL2. Interacts with EFEMP2. Post-translationally, contains hydroxylated asparagine residues. Two intrachain disulfide bonds from the TB3 domain are rearranged upon TGFB1 binding, and form interchain bonds with TGFB1 propeptide, anchoring it to the extracellular matrix. In terms of processing, O-glycosylated on serine residues by POGLUT2 and POGLUT3.

Its subcellular location is the secreted. It is found in the extracellular space. The protein localises to the extracellular matrix. Its function is as follows. Key regulator of transforming growth factor beta (TGFB1, TGFB2 and TGFB3) that controls TGF-beta activation by maintaining it in a latent state during storage in extracellular space. Associates specifically via disulfide bonds with the Latency-associated peptide (LAP), which is the regulatory chain of TGF-beta, and regulates integrin-dependent activation of TGF-beta. Outcompeted by LRRC32/GARP for binding to LAP regulatory chain of TGF-beta. This Rattus norvegicus (Rat) protein is Latent-transforming growth factor beta-binding protein 1 (Ltbp1).